Reading from the N-terminus, the 101-residue chain is Protein S100-A3 (101 aa).

EF-hand domains follow at residues 12–47 and 50–85; these read IVCT…TWTP and FREC…LCLY. Lys26 is a Ca(2+) binding site. A disulfide bridge connects residues Cys30 and Cys68. Arg51 carries the citrulline; by PAD3 modification. Residues Asp63, Asn65, Asp67, Glu69, and Glu74 each coordinate Ca(2+). 4 residues coordinate Zn(2+): Cys83, Cys86, His87, and Cys93.

This sequence belongs to the S-100 family. As to quaternary structure, homodimer and homotetramer for the citrullinated form. In terms of processing, more than half of the arginine residues undergo citrullination by PAD1 and PAD2. Arg-51 is specifically citrullinated by PAD3 and promotes tetramerization. In terms of tissue distribution, skin specific, specifically expressed in cuticle of pelage follicle.

It is found in the cytoplasm. Its function is as follows. Binds both calcium and zinc. May be involved in calcium-dependent cuticle cell differentiation, hair shaft and hair cuticular barrier formation. This Mus musculus (Mouse) protein is Protein S100-A3 (S100a3).